The chain runs to 136 residues: Gonadotropin subunit beta-2 (136 aa).

Residues 1 to 21 form the signal peptide; the sequence is MVCLFLGASSFIWSLAPAAAA. 6 disulfide bridges follow: Cys27-Cys75, Cys41-Cys90, Cys44-Cys128, Cys52-Cys106, Cys56-Cys108, and Cys111-Cys118. Residue Asn31 is glycosylated (N-linked (GlcNAc...) asparagine).

This sequence belongs to the glycoprotein hormones subunit beta family. In terms of assembly, heterodimer of an alpha and a beta chain.

Its subcellular location is the secreted. In terms of biological role, involved in gametogenesis and steroidogenesis. This Fundulus heteroclitus (Killifish) protein is Gonadotropin subunit beta-2 (cgbb).